Here is a 303-residue protein sequence, read N- to C-terminus: ATP synthase gamma chain (303 aa).

Belongs to the ATPase gamma chain family. F-type ATPases have 2 components, CF(1) - the catalytic core - and CF(0) - the membrane proton channel. CF(1) has five subunits: alpha(3), beta(3), gamma(1), delta(1), epsilon(1). CF(0) has three main subunits: a, b and c.

Its subcellular location is the cell membrane. Functionally, produces ATP from ADP in the presence of a proton gradient across the membrane. The gamma chain is believed to be important in regulating ATPase activity and the flow of protons through the CF(0) complex. This is ATP synthase gamma chain from Oenococcus oeni (strain ATCC BAA-331 / PSU-1).